The following is a 192-amino-acid chain: UPF0312 protein PC1_2518 (192 aa).

An N-terminal signal peptide occupies residues 1 to 23 (MLKKTLLSLTAVSMLASAGSALA).

Belongs to the UPF0312 family. Type 1 subfamily.

It localises to the periplasm. The polypeptide is UPF0312 protein PC1_2518 (Pectobacterium carotovorum subsp. carotovorum (strain PC1)).